The chain runs to 778 residues: Endonuclease MutS2 (778 aa).

328 to 335 serves as a coordination point for ATP; the sequence is GPNTGGKT. The region spanning 702–777 is the Smr domain; it reads LDLRGKRYEE…GSGATIVTFK (76 aa).

It belongs to the DNA mismatch repair MutS family. MutS2 subfamily. Homodimer. Binds to stalled ribosomes, contacting rRNA.

Endonuclease that is involved in the suppression of homologous recombination and thus may have a key role in the control of bacterial genetic diversity. Its function is as follows. Acts as a ribosome collision sensor, splitting the ribosome into its 2 subunits. Detects stalled/collided 70S ribosomes which it binds and splits by an ATP-hydrolysis driven conformational change. Acts upstream of the ribosome quality control system (RQC), a ribosome-associated complex that mediates the extraction of incompletely synthesized nascent chains from stalled ribosomes and their subsequent degradation. Probably generates substrates for RQC. The chain is Endonuclease MutS2 from Streptococcus pneumoniae serotype 19F (strain G54).